Consider the following 446-residue polypeptide: Argininosuccinate synthase (446 aa).

Residues A17 to S25 and A43 contribute to the ATP site. L-citrulline is bound at residue Y99. 2 residues coordinate ATP: G129 and T131. Positions 131, 135, and 136 each coordinate L-aspartate. N135 serves as a coordination point for L-citrulline. D136 lines the ATP pocket. Positions 139 and 192 each coordinate L-citrulline. D194 serves as a coordination point for ATP. The L-citrulline site is built by T201, E203, and E280.

This sequence belongs to the argininosuccinate synthase family. Type 2 subfamily. In terms of assembly, homotetramer.

Its subcellular location is the cytoplasm. It carries out the reaction L-citrulline + L-aspartate + ATP = 2-(N(omega)-L-arginino)succinate + AMP + diphosphate + H(+). The protein operates within amino-acid biosynthesis; L-arginine biosynthesis; L-arginine from L-ornithine and carbamoyl phosphate: step 2/3. In Burkholderia thailandensis (strain ATCC 700388 / DSM 13276 / CCUG 48851 / CIP 106301 / E264), this protein is Argininosuccinate synthase.